A 78-amino-acid polypeptide reads, in one-letter code: Putative membrane protein insertion efficiency factor (78 aa).

This sequence belongs to the UPF0161 family.

The protein localises to the cell membrane. Could be involved in insertion of integral membrane proteins into the membrane. The chain is Putative membrane protein insertion efficiency factor from Bacillus mycoides (strain KBAB4) (Bacillus weihenstephanensis).